We begin with the raw amino-acid sequence, 409 residues long: Multifunctional CCA protein (409 aa).

The ATP site is built by glycine 8 and arginine 11. The CTP site is built by glycine 8 and arginine 11. Mg(2+)-binding residues include aspartate 21 and aspartate 23. ATP is bound by residues arginine 91, arginine 137, and arginine 140. CTP-binding residues include arginine 91, arginine 137, and arginine 140. In terms of domain architecture, HD spans 228–329 (TGAHTLSVLL…LELLQSFDVF (102 aa)).

The protein belongs to the tRNA nucleotidyltransferase/poly(A) polymerase family. Bacterial CCA-adding enzyme type 1 subfamily. In terms of assembly, monomer. Can also form homodimers and oligomers. Mg(2+) is required as a cofactor. Ni(2+) serves as cofactor.

The catalysed reaction is a tRNA precursor + 2 CTP + ATP = a tRNA with a 3' CCA end + 3 diphosphate. It carries out the reaction a tRNA with a 3' CCA end + 2 CTP + ATP = a tRNA with a 3' CCACCA end + 3 diphosphate. Functionally, catalyzes the addition and repair of the essential 3'-terminal CCA sequence in tRNAs without using a nucleic acid template. Adds these three nucleotides in the order of C, C, and A to the tRNA nucleotide-73, using CTP and ATP as substrates and producing inorganic pyrophosphate. tRNA 3'-terminal CCA addition is required both for tRNA processing and repair. Also involved in tRNA surveillance by mediating tandem CCA addition to generate a CCACCA at the 3' terminus of unstable tRNAs. While stable tRNAs receive only 3'-terminal CCA, unstable tRNAs are marked with CCACCA and rapidly degraded. This is Multifunctional CCA protein from Pseudomonas fluorescens (strain ATCC BAA-477 / NRRL B-23932 / Pf-5).